A 397-amino-acid chain; its full sequence is Glutamyl-tRNA reductase (397 aa).

Substrate-binding positions include 47–50, Ser98, 103–105, and Gln109; these read TCGR and ETD. Cys48 (nucleophile) is an active-site residue. 177–182 contributes to the NADP(+) binding site; the sequence is GAGAVG.

This sequence belongs to the glutamyl-tRNA reductase family. As to quaternary structure, homodimer.

It carries out the reaction (S)-4-amino-5-oxopentanoate + tRNA(Glu) + NADP(+) = L-glutamyl-tRNA(Glu) + NADPH + H(+). Its pathway is porphyrin-containing compound metabolism; protoporphyrin-IX biosynthesis; 5-aminolevulinate from L-glutamyl-tRNA(Glu): step 1/2. Its function is as follows. Catalyzes the NADPH-dependent reduction of glutamyl-tRNA(Glu) to glutamate 1-semialdehyde (GSA). The polypeptide is Glutamyl-tRNA reductase (Pyrobaculum aerophilum (strain ATCC 51768 / DSM 7523 / JCM 9630 / CIP 104966 / NBRC 100827 / IM2)).